We begin with the raw amino-acid sequence, 133 residues long: Small ribosomal subunit protein uS8 (133 aa).

It belongs to the universal ribosomal protein uS8 family. As to quaternary structure, part of the 30S ribosomal subunit.

Functionally, one of the primary rRNA binding proteins, it binds directly to 16S rRNA central domain where it helps coordinate assembly of the platform of the 30S subunit. The protein is Small ribosomal subunit protein uS8 of Saccharolobus islandicus (strain L.S.2.15 / Lassen #1) (Sulfolobus islandicus).